The chain runs to 888 residues: MDRISAYAAYGLAPKKTSKRSTMKIAKHFSKKNAKKTKEAMAAKKEARKAAAKAALREVRKLERKAAADKAAKIAADKAADKAAAKAAAKAAKKAAKREKNIAKKQPEKSAAGVTENVQKQLENGQENNGTLINLSNGKQHQKPKAAKMSSSNGSFSGIDSDFLNSSDFGSTEDSFMSGSGDSFDYSNNSDFDFDSDGDSNDFDDSDAAASSCASCEYFDMDSNMVVGQESDTNGNSYMHNGTTQSEDQFTEEYTLSSIFNSTSSSGANPIKVEPRKAAKRNEPFDLNNNKNKPTAAKQPKMSLKQEQAQVGKQRADPAPSCPLPPRPSKTMIKSCPLPPKAPAAKPVPNKCRLSSRESLTKTGAKSCRLSSAPADKMANKMAAPSRKSSSKNKNNDNNNIDTNNKKDANNKKDANNNKDINNKKDANNNKDTNNNKDNNNKNKLSSNVSQLVTGNEKQRGPVHLENSIEEGKRMLNWLLNPITSETFFEQYWERNACQVKRKQPNYFTQLISFQMIDEMLIENQLEFTTNIDVTTYKKGVRQTLNPVGRAMSPAIWGYYGDGCSIRILNPSTYLPKLRQLCSTMQEFFHCLVGANVYLTPPNSQGFAPHYDDIEAFVIQVEGRKRWRLYAPPHQSDVLARTSSGNYKQEELGQPLFDAVLEAGDILYFPRGTVHQAVTEPKQHSLHITLSVYQQQAYANLLEVLMPSVLERAIKHHLSLRRGLPLHIWQHVGLAKGGQQSEQRDQLMNSTKQLVQRYLVPTEAQIDAAVDQLAKRFQHEALPPYIKPEESMRTTKVRLLRRQHPAPGGRRQQLRVYYYVDNALEYCKNEPNYMEIQPTEAPAVEALMTTYPAYLKVGKLPLRSADRRIEVATALWERGLLMTEKPFK.

Disordered regions lie at residues 83–157 (AAAK…GSFS), 187–208 (SNNSDFDFDSDGDSNDFDDSDA), and 261–446 (NSTS…NKLS). The segment covering 98–108 (REKNIAKKQPE) has biased composition (basic and acidic residues). Polar residues predominate over residues 116–139 (ENVQKQLENGQENNGTLINLSNGK). Over residues 192 to 207 (FDFDSDGDSNDFDDSD) the composition is skewed to acidic residues. The span at 273–284 (VEPRKAAKRNEP) shows a compositional bias: basic and acidic residues. Positions 392-403 (KNKNNDNNNIDT) are enriched in low complexity. Residues 404–429 (NNKKDANNKKDANNNKDINNKKDANN) are compositionally biased toward basic and acidic residues. A compositionally biased stretch (low complexity) spans 430 to 444 (NKDTNNNKDNNNKNK). Residues 564–709 (CSIRILNPST…NLLEVLMPSV (146 aa)) form the JmjC domain. Residues histidine 610, aspartate 612, and histidine 675 each contribute to the Fe cation site.

It belongs to the ROX family. NO66 subfamily. Requires Fe(2+) as cofactor.

It is found in the nucleus. It carries out the reaction N(6),N(6)-dimethyl-L-lysyl(36)-[histone H3] + 2 2-oxoglutarate + 2 O2 = L-lysyl(36)-[histone H3] + 2 formaldehyde + 2 succinate + 2 CO2. Functionally, oxygenase that can act as both a histone lysine demethylase and a ribosomal histidine hydroxylase. Specifically demethylates 'Lys-4' (H3K4me) and 'Lys-36' (H3K36me) of histone H3, thereby playing a central role in histone code. This chain is Bifunctional lysine-specific demethylase and histidyl-hydroxylase NO66, found in Drosophila mojavensis (Fruit fly).